Reading from the N-terminus, the 267-residue chain is 4-hydroxy-tetrahydrodipicolinate reductase (267 aa).

Gly10 to Met15 lines the NAD(+) pocket. An NADP(+)-binding site is contributed by Arg37. Residues Gly98–Thr100 and Ala122–Tyr125 each bind NAD(+). His155 acts as the Proton donor/acceptor in catalysis. His156 contributes to the (S)-2,3,4,5-tetrahydrodipicolinate binding site. Residue Lys159 is the Proton donor of the active site. Gly165–Thr166 contacts (S)-2,3,4,5-tetrahydrodipicolinate.

It belongs to the DapB family.

The protein localises to the cytoplasm. It catalyses the reaction (S)-2,3,4,5-tetrahydrodipicolinate + NAD(+) + H2O = (2S,4S)-4-hydroxy-2,3,4,5-tetrahydrodipicolinate + NADH + H(+). The enzyme catalyses (S)-2,3,4,5-tetrahydrodipicolinate + NADP(+) + H2O = (2S,4S)-4-hydroxy-2,3,4,5-tetrahydrodipicolinate + NADPH + H(+). Its pathway is amino-acid biosynthesis; L-lysine biosynthesis via DAP pathway; (S)-tetrahydrodipicolinate from L-aspartate: step 4/4. Its function is as follows. Catalyzes the conversion of 4-hydroxy-tetrahydrodipicolinate (HTPA) to tetrahydrodipicolinate. This is 4-hydroxy-tetrahydrodipicolinate reductase from Pseudoalteromonas translucida (strain TAC 125).